The following is a 42-amino-acid chain: Photosystem I reaction center subunit IX (42 aa).

A helical transmembrane segment spans residues 7 to 27 (YLSVAPVLSTLWFGALAGLLI).

This sequence belongs to the PsaJ family.

It localises to the plastid. Its subcellular location is the chloroplast thylakoid membrane. Functionally, may help in the organization of the PsaE and PsaF subunits. The polypeptide is Photosystem I reaction center subunit IX (Platanus occidentalis (Sycamore)).